A 970-amino-acid chain; its full sequence is Disks large 1 tumor suppressor protein (970 aa).

The region spanning 4 to 64 (KKQEAHRALE…FYELTLLDDS (61 aa)) is the L27 domain. The disordered stretch occupies residues 161-209 (TENAKEPTVEQQQKQQQAQQRSSRSPQQQNPQQQQGSKSRSGSQTVNGD). Residues 171-204 (QQQKQQQAQQRSSRSPQQQNPQQQQGSKSRSGSQ) are compositionally biased toward low complexity. 2 consecutive PDZ domains span residues 216-303 (DIQL…KRKR) and 330-421 (EIDL…GKTQ). The tract at residues 424-477 (TTSASGGGGGGLSSGQQLSQSQSQLATSQSQSQVHQQQHATPMVNSQSTEPGSR) is disordered. A compositionally biased stretch (low complexity) spans 437–462 (SGQQLSQSQSQLATSQSQSQVHQQQH). Over residues 466-477 (MVNSQSTEPGSR) the composition is skewed to polar residues. At serine 496 the chain carries Phosphoserine. Residues 506–587 (TITIQKGPQG…VVTLLAQYRP (82 aa)) form the PDZ 3 domain. One can recognise an SH3 domain in the interval 620–690 (KRSLYVRALF…PSKRRWERKM (71 aa)). A Phosphothreonine modification is found at threonine 714. In terms of domain architecture, Guanylate kinase-like spans 780–955 (TRPVIILGPL…IYSKVKSMIW (176 aa)).

Belongs to the MAGUK family. During the cellular blastoderm stage, isoform B, isoform F, isoform H, isoform I and isoform L expression is localized to the cell borders. From stage 11 onwards, expression is found predominantly in the developing nervous system: axon bundles in the ventral cord and the brain. Stage 14 and 15 embryos exhibit expression in the developing body wall muscle. Expression in neuropil regions of the CNS and at NMJs persists through to larval development. Other isoforms show expression in embryonic epithelial cells. In larvae, expression is seen as a belt around salivary glands, imaginal disks and proventriculus. Expressed in adult reproductive tissues. In epithelia, coexpressed with scrib throughout development.

The protein resides in the cytoplasm. It is found in the cell membrane. The protein localises to the basolateral cell membrane. Its subcellular location is the cytoskeleton. It localises to the cell junction. The protein resides in the septate junction. In terms of biological role, during embryonic development, some isoforms are essential for proper neuronal differentiation and organization. Required for cell polarity; maintenance of apicobasal polarity. Plays a critical role at septate junctions in cellular growth control during larval development. The presence of a guanylate kinase domain suggests involvement in cellular adhesion as well as signal transduction to control cellular proliferation. This is Disks large 1 tumor suppressor protein (dlg1) from Drosophila melanogaster (Fruit fly).